Here is a 359-residue protein sequence, read N- to C-terminus: DNA polymerase IV (359 aa).

Residues 6-186 enclose the UmuC domain; it reads IIHVDMDAFY…LPIEAFWGVG (181 aa). Mg(2+)-binding residues include aspartate 10 and aspartate 104. Glutamate 105 is an active-site residue.

The protein belongs to the DNA polymerase type-Y family. Monomer. Mg(2+) serves as cofactor.

It is found in the cytoplasm. It catalyses the reaction DNA(n) + a 2'-deoxyribonucleoside 5'-triphosphate = DNA(n+1) + diphosphate. Poorly processive, error-prone DNA polymerase involved in untargeted mutagenesis. Copies undamaged DNA at stalled replication forks, which arise in vivo from mismatched or misaligned primer ends. These misaligned primers can be extended by PolIV. Exhibits no 3'-5' exonuclease (proofreading) activity. May be involved in translesional synthesis, in conjunction with the beta clamp from PolIII. The sequence is that of DNA polymerase IV from Akkermansia muciniphila (strain ATCC BAA-835 / DSM 22959 / JCM 33894 / BCRC 81048 / CCUG 64013 / CIP 107961 / Muc).